The sequence spans 1028 residues: MKFFALFIYRPVATILISIAITLCGVLGFRLLPVAPLPQVDFPVIMVSASLPGASPETMASSVATPLERSLGRIAGVSEMTSSSSLGSTRIILQFNFDRDINGAARDVQAAINAAQSLLPSGMPSRPTYRKANPSDAPIMILTLTSDTWSQGELYDFASTQLAQTIAQIDGVGDVDVGGSSLPAVRVGLNPQALFNQGVSLDDVRSAISNANVRKPQGAIDDKTHRWQVQTNDELKTATEYQPLIIHYNNGAAVRLGDVATVTDSVQDVRNAGMTNAKPAILLMIRKLPEANIIQTVDSIREKLPELQTLIPASIDLQIAQDRSPTIRASLEEVEQTLVISVALVILVVFLFLRSGRATLIPAVAVPVSLIGTFAAMYLCGFSLNNLSLMALTIATGFVVDDAIVVLENISRHLEAGMKPLQAALQGTREVGFTVLSMSLSLVAVFLPLLLMGGLPGRLLREFAVTLSVAIGISLLVSLTLTPMMCGWMLKSSKPREQTRSRGFGRLLTGLQQGYGTSLKWVLNHTRLVGVVLLGTIALNIWLYISIPKTFFPEQDTGVLMGGIQADQSISFQAMRGKLQDFMKIIRDDPAVDNVTGFTGGSRVNSGMMFITLKSRGERHETAQQVIDRLRVALAKEPGANLFLMAVQDIRVGGRQANASYQYALLSDDLSALREWEPKIRKALAALPQLADVNSDQQDNGAEMNLIYDRETMSRLGIDVQAANSLLNNAFGQRQISTIYQPMNQYKVVMEVDSRYTQDISALEKMFVINSDGKAIPLSYFAKWQPANAPLSVNHQGLSAASTIAFNLPTGTSLSEATEAINRAMTQLGVPSTVRGSFAGTAQVFQETMNSQVILILAAIATVYIVLGILYESYVHPLTILSTLPSAGVGALLALELFNAPFSLIALIGIMLLIGIVKKNAIMMVDFALEAQRNGNLTPEQAIFQACLLRFRPIMMTTLAALFGALPLVISGGDGSELRQPLGITIVGGLVMSQLLTLYTTPVVYLFFDRLRLRFSRNNSQPESITEP.

The next 12 helical transmembrane spans lie at 3–23 (FFALFIYRPVATILISIAITL), 333–353 (EVEQTLVISVALVILVVFLFL), 360–380 (LIPAVAVPVSLIGTFAAMYLC), 387–407 (LSLMALTIATGFVVDDAIVVL), 431–451 (VGFTVLSMSLSLVAVFLPLLL), 463–483 (FAVTLSVAIGISLLVSLTLTP), 528–548 (LVGVVLLGTIALNIWLYISIP), 853–873 (VILILAAIATVYIVLGILYES), 875–895 (VHPLTILSTLPSAGVGALLAL), 897–917 (LFNAPFSLIALIGIMLLIGIV), 953–973 (PIMMTTLAALFGALPLVISGG), and 984–1004 (ITIVGGLVMSQLLTLYTTPVV).

It belongs to the resistance-nodulation-cell division (RND) (TC 2.A.6) family. MdtC subfamily. As to quaternary structure, part of a tripartite efflux system composed of MdtA, MdtB and MdtC. MdtC forms a heteromultimer with MdtB.

The protein resides in the cell inner membrane. The polypeptide is Multidrug resistance protein MdtC (Citrobacter koseri (strain ATCC BAA-895 / CDC 4225-83 / SGSC4696)).